Here is a 445-residue protein sequence, read N- to C-terminus: Protein cereblon (445 aa).

The tract at residues 1 to 50 (MAAEEGGDGRRNMGNPPPPAPAESEEEDDNEMEVEDQDGKEAEKPNMINF) is disordered. Acidic residues predominate over residues 23–36 (ESEEEDDNEMEVED). Residues 82–321 (IPVLPHVMVM…CELDIMNKCT (240 aa)) enclose the Lon N-terminal domain. The CULT domain occupies 320–428 (CTSLCCKQCQ…LTRSALLPRI (109 aa)). Cys-325 and Cys-328 together coordinate Zn(2+). Positions 380, 382, and 388 each coordinate (S)-thalidomide. Zn(2+) is bound by residues Cys-393 and Cys-396.

It belongs to the CRBN family. In terms of assembly, component of a DCX (DDB1-CUL4-X-box) protein ligase complex. Interacts directly with DDB1.

It is found in the cytoplasm. It localises to the nucleus. It participates in protein modification; protein ubiquitination. Substrate recognition component of a DCX (DDB1-CUL4-X-box) E3 protein ligase complex that mediates the ubiquitination and subsequent proteasomal degradation of target proteins, such as MEIS2. Normal degradation of key regulatory proteins is required for normal limb outgrowth and expression of the fibroblast growth factor FGF8. Maintains presynaptic glutamate release and consequently cognitive functions, such as memory and learning, by negatively regulating large-conductance calcium-activated potassium (BK) channels in excitatory neurons. Likely to function by regulating the assembly and neuronal surface expression of BK channels via its interaction with KCNT1. May also be involved in regulating anxiety-like behaviors via a BK channel-independent mechanism. The polypeptide is Protein cereblon (CRBN) (Gallus gallus (Chicken)).